A 301-amino-acid chain; its full sequence is Probable 5-dehydro-4-deoxyglucarate dehydratase (301 aa).

It belongs to the DapA family.

The enzyme catalyses 5-dehydro-4-deoxy-D-glucarate + H(+) = 2,5-dioxopentanoate + CO2 + H2O. It participates in carbohydrate acid metabolism; D-glucarate degradation; 2,5-dioxopentanoate from D-glucarate: step 2/2. The polypeptide is Probable 5-dehydro-4-deoxyglucarate dehydratase (Cereibacter sphaeroides (strain KD131 / KCTC 12085) (Rhodobacter sphaeroides)).